Consider the following 118-residue polypeptide: UPF0102 protein CMM_1377 (118 aa).

This sequence belongs to the UPF0102 family.

The chain is UPF0102 protein CMM_1377 from Clavibacter michiganensis subsp. michiganensis (strain NCPPB 382).